The chain runs to 351 residues: Bifunctional UDP-glucose 4-epimerase and UDP-xylose 4-epimerase 3 (351 aa).

Residue 8 to 39 (NILVTGGAGFIGTHTVVQLLNQGFKVTIIDNL) participates in NAD(+) binding. Residue serine 134 coordinates substrate. Tyrosine 158 (proton acceptor) is an active-site residue.

This sequence belongs to the NAD(P)-dependent epimerase/dehydratase family. As to quaternary structure, homodimer. Heterodimer. NAD(+) is required as a cofactor. Ubiquitous.

It carries out the reaction UDP-alpha-D-glucose = UDP-alpha-D-galactose. It catalyses the reaction UDP-beta-L-arabinopyranose = UDP-alpha-D-xylose. It functions in the pathway carbohydrate metabolism; galactose metabolism. The protein operates within nucleotide-sugar biosynthesis; UDP-L-arabinose biosynthesis; UDP-L-arabinose from UDP-alpha-D-xylose: step 1/1. Its pathway is cell wall biogenesis; cell wall polysaccharide biosynthesis. With respect to regulation, strongly inhibited by UDP. Its function is as follows. Catalyzes the interconversion between UDP-glucose and UDP-galactose and the interconversion between UDP-arabinose and UDP-xylose. Cooperates with UGE2 in pollen development. May preferentially act in the UDP-galactose to UDP-glucose direction, therefore displaying a role in carbohydrate catabolism. The protein is Bifunctional UDP-glucose 4-epimerase and UDP-xylose 4-epimerase 3 (UGE3) of Arabidopsis thaliana (Mouse-ear cress).